The chain runs to 239 residues: tRNA (guanine-N(1)-)-methyltransferase (239 aa).

Residues Gly113 and 137–142 (LGDYVL) each bind S-adenosyl-L-methionine.

The protein belongs to the RNA methyltransferase TrmD family. Homodimer.

Its subcellular location is the cytoplasm. It carries out the reaction guanosine(37) in tRNA + S-adenosyl-L-methionine = N(1)-methylguanosine(37) in tRNA + S-adenosyl-L-homocysteine + H(+). Functionally, specifically methylates guanosine-37 in various tRNAs. This is tRNA (guanine-N(1)-)-methyltransferase from Cutibacterium acnes (strain DSM 16379 / KPA171202) (Propionibacterium acnes).